The primary structure comprises 288 residues: Phenazine biosynthesis-like domain-containing protein (288 aa).

Glutamate 46 is a catalytic residue.

The protein belongs to the PhzF family. In terms of assembly, interacts with UNRIP/MAWD.

The sequence is that of Phenazine biosynthesis-like domain-containing protein (PBLD) from Pongo abelii (Sumatran orangutan).